A 351-amino-acid chain; its full sequence is Molybdenum import ATP-binding protein ModC (351 aa).

The ABC transporter domain occupies 1 to 229; the sequence is MLKINVKKQL…PLFLPWKLED (229 aa). Residue 31-38 coordinates ATP; sequence GLSGSGKT. The Mop domain maps to 289-351; the sequence is KTSIRNILHG…FAQIKAVSVL (63 aa).

The protein belongs to the ABC transporter superfamily. Molybdate importer (TC 3.A.1.8) family. As to quaternary structure, the complex is composed of two ATP-binding proteins (ModC), two transmembrane proteins (ModB) and a solute-binding protein (ModA).

It is found in the cell inner membrane. It carries out the reaction molybdate(out) + ATP + H2O = molybdate(in) + ADP + phosphate + H(+). Functionally, part of the ABC transporter complex ModABC involved in molybdenum import. Responsible for energy coupling to the transport system. This Pasteurella multocida (strain Pm70) protein is Molybdenum import ATP-binding protein ModC.